The primary structure comprises 179 residues: UPF0316 protein BH0621 (179 aa).

Helical transmembrane passes span 9-29, 41-61, and 67-87; these read ALTM…LFTV, LAAT…SLVL, and IENL…GMKV.

The protein belongs to the UPF0316 family.

Its subcellular location is the cell membrane. This Halalkalibacterium halodurans (strain ATCC BAA-125 / DSM 18197 / FERM 7344 / JCM 9153 / C-125) (Bacillus halodurans) protein is UPF0316 protein BH0621.